Here is a 144-residue protein sequence, read N- to C-terminus: Maximins 3/H2 (144 aa).

Positions 1-18 (MNFKYIVAVSFLIASAYA) are cleaved as a signal peptide. Propeptides lie at residues 19–43 (RSVQ…REIR) and 74–123 (TAEE…KEKR). Residue isoleucine 143 is modified to Isoleucine amide.

The protein belongs to the bombinin family. Expressed by the skin glands.

It localises to the secreted. Maximin-3 shows antibacterial activity against both Gram-positive and Gram-negative bacteria. It also shows antimicrobial activity against the fungus C.albicans, but not against A.flavus nor P.uticale. It has little hemolytic activity. It possess a significant cytotoxicity against tumor cell lines. It possess a significant anti-HIV activity. It shows high spermicidal activity. Functionally, maximin-H2 shows antibacterial activity against both Gram-positive and Gram-negative bacteria. It also shows antimicrobial activity against the fungus C.albicans. Shows strong hemolytic activity. The protein is Maximins 3/H2 of Bombina maxima (Giant fire-bellied toad).